A 451-amino-acid chain; its full sequence is Bifunctional protein GlmU (451 aa).

Residues 1–231 (MDSPLAIIVL…ADEVAGINSR (231 aa)) form a pyrophosphorylase region. Residues 10-13 (LAAG), Lys-24, Gln-74, 79-80 (GT), 102-104 (YGD), Gly-142, Glu-156, Asn-171, and Asn-229 each bind UDP-N-acetyl-alpha-D-glucosamine. Asp-104 lines the Mg(2+) pocket. Residue Asn-229 participates in Mg(2+) binding. The segment at 232–252 (GELAEAEGRWQQRRRAAAMAD) is linker. The interval 253 to 451 (GASLIAPETV…MKKKKAEKKS (199 aa)) is N-acetyltransferase. UDP-N-acetyl-alpha-D-glucosamine is bound by residues Arg-318 and Lys-336. The Proton acceptor role is filled by His-348. The UDP-N-acetyl-alpha-D-glucosamine site is built by Tyr-351 and Asn-362. Residues Ala-365, 371-372 (NY), Ser-390, Ala-408, and Arg-425 each bind acetyl-CoA.

The protein in the N-terminal section; belongs to the N-acetylglucosamine-1-phosphate uridyltransferase family. In the C-terminal section; belongs to the transferase hexapeptide repeat family. As to quaternary structure, homotrimer. The cofactor is Mg(2+).

The protein localises to the cytoplasm. It carries out the reaction alpha-D-glucosamine 1-phosphate + acetyl-CoA = N-acetyl-alpha-D-glucosamine 1-phosphate + CoA + H(+). It catalyses the reaction N-acetyl-alpha-D-glucosamine 1-phosphate + UTP + H(+) = UDP-N-acetyl-alpha-D-glucosamine + diphosphate. Its pathway is nucleotide-sugar biosynthesis; UDP-N-acetyl-alpha-D-glucosamine biosynthesis; N-acetyl-alpha-D-glucosamine 1-phosphate from alpha-D-glucosamine 6-phosphate (route II): step 2/2. The protein operates within nucleotide-sugar biosynthesis; UDP-N-acetyl-alpha-D-glucosamine biosynthesis; UDP-N-acetyl-alpha-D-glucosamine from N-acetyl-alpha-D-glucosamine 1-phosphate: step 1/1. It participates in bacterial outer membrane biogenesis; LPS lipid A biosynthesis. Its function is as follows. Catalyzes the last two sequential reactions in the de novo biosynthetic pathway for UDP-N-acetylglucosamine (UDP-GlcNAc). The C-terminal domain catalyzes the transfer of acetyl group from acetyl coenzyme A to glucosamine-1-phosphate (GlcN-1-P) to produce N-acetylglucosamine-1-phosphate (GlcNAc-1-P), which is converted into UDP-GlcNAc by the transfer of uridine 5-monophosphate (from uridine 5-triphosphate), a reaction catalyzed by the N-terminal domain. The polypeptide is Bifunctional protein GlmU (Novosphingobium aromaticivorans (strain ATCC 700278 / DSM 12444 / CCUG 56034 / CIP 105152 / NBRC 16084 / F199)).